We begin with the raw amino-acid sequence, 322 residues long: Eukaryotic translation initiation factor 3 subunit I (322 aa).

5 WD repeats span residues 4–43, 46–85, 141–180, 184–223, and 281–322; these read GHER…RLGT, GHQG…VIAS, MTES…KVVD, DHTG…CLKT, and GHFG…NIFE.

This sequence belongs to the eIF-3 subunit I family. In terms of assembly, component of the eukaryotic translation initiation factor 3 (eIF-3) complex. The eIF-3 complex interacts with pix.

The protein resides in the cytoplasm. Component of the eukaryotic translation initiation factor 3 (eIF-3) complex, which is involved in protein synthesis of a specialized repertoire of mRNAs and, together with other initiation factors, stimulates binding of mRNA and methionyl-tRNAi to the 40S ribosome. The eIF-3 complex specifically targets and initiates translation of a subset of mRNAs involved in cell proliferation. This Drosophila willistoni (Fruit fly) protein is Eukaryotic translation initiation factor 3 subunit I.